A 171-amino-acid chain; its full sequence is UPF0763 protein HPSH_03535 (171 aa).

Belongs to the UPF0763 family.

The sequence is that of UPF0763 protein HPSH_03535 from Helicobacter pylori (strain Shi470).